Consider the following 139-residue polypeptide: Large ribosomal subunit protein uL16 (139 aa).

Over residues 1–17 (MLIPRRTKHRKQHHPRR) the composition is skewed to basic residues. Residues 1-24 (MLIPRRTKHRKQHHPRRTGAASGG) form a disordered region.

The protein belongs to the universal ribosomal protein uL16 family. Part of the 50S ribosomal subunit.

Binds 23S rRNA and is also seen to make contacts with the A and possibly P site tRNAs. In Beutenbergia cavernae (strain ATCC BAA-8 / DSM 12333 / CCUG 43141 / JCM 11478 / NBRC 16432 / NCIMB 13614 / HKI 0122), this protein is Large ribosomal subunit protein uL16.